The primary structure comprises 126 residues: Large ribosomal subunit protein bL12 (126 aa).

Belongs to the bacterial ribosomal protein bL12 family. Homodimer. Part of the ribosomal stalk of the 50S ribosomal subunit. Forms a multimeric L10(L12)X complex, where L10 forms an elongated spine to which 2 to 4 L12 dimers bind in a sequential fashion. Binds GTP-bound translation factors.

Forms part of the ribosomal stalk which helps the ribosome interact with GTP-bound translation factors. Is thus essential for accurate translation. The protein is Large ribosomal subunit protein bL12 of Geotalea daltonii (strain DSM 22248 / JCM 15807 / FRC-32) (Geobacter daltonii).